The chain runs to 294 residues: Ribosomal protein L11 methyltransferase (294 aa).

The S-adenosyl-L-methionine site is built by threonine 146, glycine 167, aspartate 189, and asparagine 231.

The protein belongs to the methyltransferase superfamily. PrmA family.

It is found in the cytoplasm. The catalysed reaction is L-lysyl-[protein] + 3 S-adenosyl-L-methionine = N(6),N(6),N(6)-trimethyl-L-lysyl-[protein] + 3 S-adenosyl-L-homocysteine + 3 H(+). Methylates ribosomal protein L11. The sequence is that of Ribosomal protein L11 methyltransferase from Aliivibrio salmonicida (strain LFI1238) (Vibrio salmonicida (strain LFI1238)).